A 186-amino-acid polypeptide reads, in one-letter code: Protein Syd (186 aa).

The protein belongs to the Syd family.

It localises to the cell inner membrane. In terms of biological role, interacts with the SecY protein in vivo. May bind preferentially to an uncomplexed state of SecY, thus functioning either as a chelating agent for excess SecY in the cell or as a regulatory factor that negatively controls the translocase function. In Pseudoalteromonas atlantica (strain T6c / ATCC BAA-1087), this protein is Protein Syd.